Reading from the N-terminus, the 39-residue chain is SPbeta prophage-derived uncharacterized protein YorT (39 aa).

In Bacillus subtilis (strain 168), this protein is SPbeta prophage-derived uncharacterized protein YorT (yorT).